Reading from the N-terminus, the 341-residue chain is NADH-quinone oxidoreductase subunit H 2 (341 aa).

Transmembrane regions (helical) follow at residues 13–33 (IVVIGQSVLLIVVLLISIAYI), 82–102 (GVFLLAPLVTCVLALSAWAVI), 115–135 (VGVLYILAVSSLSVYGIIMAG), 161–181 (IGFVIICVLLCVGSLNLTAIV), 190–210 (VLGWYWLPLFPMFVVFYVSAL), 242–262 (LFVLGEYVAIVTMCAMGTILF), 277–297 (WVPGIVWFALKVLFMFFMFAM), and 317–337 (VFLPLSLAMVVIVAAVLQFAG).

Belongs to the complex I subunit 1 family. NDH-1 is composed of 14 different subunits. Subunits NuoA, H, J, K, L, M, N constitute the membrane sector of the complex.

It localises to the cell inner membrane. The enzyme catalyses a quinone + NADH + 5 H(+)(in) = a quinol + NAD(+) + 4 H(+)(out). NDH-1 shuttles electrons from NADH, via FMN and iron-sulfur (Fe-S) centers, to quinones in the respiratory chain. The immediate electron acceptor for the enzyme in this species is believed to be ubiquinone. Couples the redox reaction to proton translocation (for every two electrons transferred, four hydrogen ions are translocated across the cytoplasmic membrane), and thus conserves the redox energy in a proton gradient. This subunit may bind ubiquinone. The polypeptide is NADH-quinone oxidoreductase subunit H 2 (Rhodopseudomonas palustris (strain HaA2)).